Here is a 378-residue protein sequence, read N- to C-terminus: Erythronate-4-phosphate dehydrogenase (378 aa).

Ser45 and Thr66 together coordinate substrate. NAD(+) contacts are provided by Asp146 and Thr175. Residue Arg208 is part of the active site. Asp232 contributes to the NAD(+) binding site. Glu237 is an active-site residue. Catalysis depends on His254, which acts as the Proton donor. Position 257 (Gly257) interacts with NAD(+). Tyr258 contributes to the substrate binding site.

Belongs to the D-isomer specific 2-hydroxyacid dehydrogenase family. PdxB subfamily. In terms of assembly, homodimer.

It localises to the cytoplasm. The catalysed reaction is 4-phospho-D-erythronate + NAD(+) = (R)-3-hydroxy-2-oxo-4-phosphooxybutanoate + NADH + H(+). It functions in the pathway cofactor biosynthesis; pyridoxine 5'-phosphate biosynthesis; pyridoxine 5'-phosphate from D-erythrose 4-phosphate: step 2/5. Functionally, catalyzes the oxidation of erythronate-4-phosphate to 3-hydroxy-2-oxo-4-phosphonooxybutanoate. The sequence is that of Erythronate-4-phosphate dehydrogenase from Shigella dysenteriae serotype 1 (strain Sd197).